The chain runs to 824 residues: Probable receptor-like protein kinase At5g24010 (824 aa).

The N-terminal stretch at 1-24 (MAFPINLTQTLLFFFCPLLHLSFA) is a signal peptide. N6, N41, N204, N227, and N291 each carry an N-linked (GlcNAc...) asparagine glycan. The Extracellular portion of the chain corresponds to 25–406 (AFTPTDNYLI…SSEVVSGKRN (382 aa)). The helical transmembrane segment at 407–427 (VVWIVVGSVLGGFVFLSLFFL) threads the bilayer. Residues 428 to 824 (SVLCLCRRKN…FSQLMTNAGR (397 aa)) lie on the Cytoplasmic side of the membrane. The tract at residues 440 to 467 (TRSSESTGWTPLRRFRGSSNSRTTERTV) is disordered. Residues 456–467 (GSSNSRTTERTV) show a composition bias toward polar residues. Residues 489–764 (FDRSLVIGVG…VLWNLEHVLQ (276 aa)) enclose the Protein kinase domain. Residues 495–503 (IGVGGFGMV) and K517 contribute to the ATP site. D613 acts as the Proton acceptor in catalysis. The segment at 777-803 (DYGDVTDPRTARQGLSNGSNIERDYGD) is disordered.

The protein belongs to the protein kinase superfamily. Ser/Thr protein kinase family.

It localises to the membrane. In Arabidopsis thaliana (Mouse-ear cress), this protein is Probable receptor-like protein kinase At5g24010.